A 256-amino-acid polypeptide reads, in one-letter code: Extracellular serine-rich protein ARB_03024 (256 aa).

The first 19 residues, 1 to 19 (MVATKSVLSAVALAGVAAA), serve as a signal peptide directing secretion. Positions 135-235 (KIVPQSGSPT…TPTASPGAAA (101 aa)) are disordered. Residues 149–159 (GTLGGSGGSGG) are compositionally biased toward gly residues. Composition is skewed to low complexity over residues 160-204 (SSSS…QSTP) and 215-235 (PSAT…GAAA). Residue Ala233 is the site of GPI-anchor amidated alanine attachment. Positions 234–256 (AAGLKGSAVLAGVVALGAWIGLL) are cleaved as a propeptide — removed in mature form.

Its subcellular location is the cell membrane. The protein localises to the secreted. This is Extracellular serine-rich protein ARB_03024 from Arthroderma benhamiae (strain ATCC MYA-4681 / CBS 112371) (Trichophyton mentagrophytes).